A 461-amino-acid polypeptide reads, in one-letter code: Bifunctional protein GlmU (461 aa).

The tract at residues 1–243 (MNATVPSAAP…EDELRGINSR (243 aa)) is pyrophosphorylase. UDP-N-acetyl-alpha-D-glucosamine-binding positions include 24–27 (LAAG), Lys-38, Gln-86, 91–92 (GT), 112–114 (YGD), Gly-155, Glu-169, Asn-184, and Asn-241. Asp-114 contributes to the Mg(2+) binding site. Asn-241 contributes to the Mg(2+) binding site. The tract at residues 244–264 (AELAEAEACVQRRLRAAALDG) is linker. Residues 265 to 461 (GATLVAPETV…AALRRKKEQG (197 aa)) form an N-acetyltransferase region. Positions 330 and 348 each coordinate UDP-N-acetyl-alpha-D-glucosamine. His-360 acts as the Proton acceptor in catalysis. UDP-N-acetyl-alpha-D-glucosamine is bound by residues Tyr-363 and Asn-374. Acetyl-CoA contacts are provided by residues Ala-377, 383-384 (NY), Ser-402, Ala-420, and Arg-437.

It in the N-terminal section; belongs to the N-acetylglucosamine-1-phosphate uridyltransferase family. This sequence in the C-terminal section; belongs to the transferase hexapeptide repeat family. Homotrimer. Requires Mg(2+) as cofactor.

The protein resides in the cytoplasm. It catalyses the reaction alpha-D-glucosamine 1-phosphate + acetyl-CoA = N-acetyl-alpha-D-glucosamine 1-phosphate + CoA + H(+). The enzyme catalyses N-acetyl-alpha-D-glucosamine 1-phosphate + UTP + H(+) = UDP-N-acetyl-alpha-D-glucosamine + diphosphate. Its pathway is nucleotide-sugar biosynthesis; UDP-N-acetyl-alpha-D-glucosamine biosynthesis; N-acetyl-alpha-D-glucosamine 1-phosphate from alpha-D-glucosamine 6-phosphate (route II): step 2/2. It participates in nucleotide-sugar biosynthesis; UDP-N-acetyl-alpha-D-glucosamine biosynthesis; UDP-N-acetyl-alpha-D-glucosamine from N-acetyl-alpha-D-glucosamine 1-phosphate: step 1/1. The protein operates within bacterial outer membrane biogenesis; LPS lipid A biosynthesis. Functionally, catalyzes the last two sequential reactions in the de novo biosynthetic pathway for UDP-N-acetylglucosamine (UDP-GlcNAc). The C-terminal domain catalyzes the transfer of acetyl group from acetyl coenzyme A to glucosamine-1-phosphate (GlcN-1-P) to produce N-acetylglucosamine-1-phosphate (GlcNAc-1-P), which is converted into UDP-GlcNAc by the transfer of uridine 5-monophosphate (from uridine 5-triphosphate), a reaction catalyzed by the N-terminal domain. This chain is Bifunctional protein GlmU, found in Gluconacetobacter diazotrophicus (strain ATCC 49037 / DSM 5601 / CCUG 37298 / CIP 103539 / LMG 7603 / PAl5).